The sequence spans 192 residues: Casparian strip membrane protein 2 (192 aa).

The Cytoplasmic segment spans residues methionine 1–serine 31. The chain crosses the membrane as a helical span at residues valine 32–methionine 52. The Extracellular portion of the chain corresponds to glycine 53 to threonine 79. N-linked (GlcNAc...) asparagine glycosylation is present at asparagine 56. A helical membrane pass occupies residues phenylalanine 80–isoleucine 100. The Cytoplasmic portion of the chain corresponds to valine 101 to arginine 112. The helical transmembrane segment at leucine 113–alanine 133 threads the bilayer. Residues alanine 134–serine 166 are Extracellular-facing. A helical membrane pass occupies residues leucine 167–alanine 187. Topologically, residues leucine 188 to histidine 192 are cytoplasmic.

It belongs to the Casparian strip membrane proteins (CASP) family. In terms of assembly, homodimer and heterodimers.

It localises to the cell membrane. Functionally, regulates membrane-cell wall junctions and localized cell wall deposition. Required for establishment of the Casparian strip membrane domain (CSD) and the subsequent formation of Casparian strips, a cell wall modification of the root endodermis that determines an apoplastic barrier between the intraorganismal apoplasm and the extraorganismal apoplasm and prevents lateral diffusion. The sequence is that of Casparian strip membrane protein 2 from Panicum virgatum (Blackwell switchgrass).